Reading from the N-terminus, the 289-residue chain is Acetyl-coenzyme A carboxylase carboxyl transferase subunit beta (289 aa).

The CoA carboxyltransferase N-terminal domain maps to 24 to 289 (LWIKCPESGE…NSPRRAPIPA (266 aa)).

The protein belongs to the AccD/PCCB family. Acetyl-CoA carboxylase is a heterohexamer composed of biotin carboxyl carrier protein (AccB), biotin carboxylase (AccC) and two subunits each of ACCase subunit alpha (AccA) and ACCase subunit beta (AccD).

It is found in the cytoplasm. The enzyme catalyses N(6)-carboxybiotinyl-L-lysyl-[protein] + acetyl-CoA = N(6)-biotinyl-L-lysyl-[protein] + malonyl-CoA. The protein operates within lipid metabolism; malonyl-CoA biosynthesis; malonyl-CoA from acetyl-CoA: step 1/1. Component of the acetyl coenzyme A carboxylase (ACC) complex. Biotin carboxylase (BC) catalyzes the carboxylation of biotin on its carrier protein (BCCP) and then the CO(2) group is transferred by the transcarboxylase to acetyl-CoA to form malonyl-CoA. The chain is Acetyl-coenzyme A carboxylase carboxyl transferase subunit beta from Beijerinckia indica subsp. indica (strain ATCC 9039 / DSM 1715 / NCIMB 8712).